A 170-amino-acid chain; its full sequence is Peptide deformylase-like (170 aa).

Residue Glu-139 is part of the active site.

This sequence belongs to the polypeptide deformylase family.

This Bradyrhizobium diazoefficiens (strain JCM 10833 / BCRC 13528 / IAM 13628 / NBRC 14792 / USDA 110) protein is Peptide deformylase-like.